Consider the following 129-residue polypeptide: MAKEATRVRRRERKNISSGVVHINSTFNNTMITITDAQGNAIAWSSAGAQGFKGARKSTPFAAQVAAEDCARKAQEHGMRSLEVEVCGPGAGRESALRALQSVGFVITSIRDVTPIPHNGCRPRKRRRV.

It belongs to the universal ribosomal protein uS11 family. In terms of assembly, part of the 30S ribosomal subunit. Interacts with proteins S7 and S18. Binds to IF-3.

Its function is as follows. Located on the platform of the 30S subunit, it bridges several disparate RNA helices of the 16S rRNA. Forms part of the Shine-Dalgarno cleft in the 70S ribosome. The sequence is that of Small ribosomal subunit protein uS11 from Bartonella tribocorum (strain CIP 105476 / IBS 506).